The following is a 370-amino-acid chain: Protein-tyrosine sulfotransferase 1 (370 aa).

The Cytoplasmic portion of the chain corresponds to 1–8; the sequence is MVGKLKQN. Residues 9–25 traverse the membrane as a helical; Signal-anchor for type II membrane protein segment; the sequence is LLLACLVISSVTVFYLG. The Lumenal portion of the chain corresponds to 26 to 370; the sequence is QHAMECHHRI…KEKPQTEQVE (345 aa). An N-linked (GlcNAc...) asparagine glycan is attached at asparagine 60. 79–83 provides a ligand contact to 3'-phosphoadenylyl sulfate; sequence RSGTT. A disulfide bond links cysteine 97 and cysteine 157. Glutamate 100 serves as the catalytic Proton donor/acceptor. The interaction with peptide substrate stretch occupies residues 102 to 106; the sequence is RVIPR. Positions 184, 192, and 196 each coordinate 3'-phosphoadenylyl sulfate. An intrachain disulfide couples cysteine 226 to cysteine 234. Residue tyrosine 239 coordinates 3'-phosphoadenylyl sulfate. An N-linked (GlcNAc...) asparagine glycan is attached at asparagine 262. Residues 286-295 and lysine 301 each bind 3'-phosphoadenylyl sulfate; that span reads STDQVIKPVN.

It belongs to the protein sulfotransferase family. As to quaternary structure, homodimer. Can also form heterodimers with TPST2. Post-translationally, N-glycosylated.

It is found in the golgi apparatus membrane. It catalyses the reaction L-tyrosyl-[protein] + 3'-phosphoadenylyl sulfate = O-sulfo-L-tyrosine-[protein] + adenosine 3',5'-bisphosphate + H(+). Catalyzes the O-sulfation of tyrosine residues within acidic motifs of polypeptides, using 3'-phosphoadenylyl sulfate (PAPS) as cosubstrate. In Rattus norvegicus (Rat), this protein is Protein-tyrosine sulfotransferase 1 (Tpst1).